The chain runs to 269 residues: Monofunctional glycosyltransferase (269 aa).

The helical transmembrane segment at isoleucine 46 to threonine 66 threads the bilayer.

Belongs to the glycosyltransferase 51 family.

The protein localises to the cell membrane. The enzyme catalyses [GlcNAc-(1-&gt;4)-Mur2Ac(oyl-L-Ala-gamma-D-Glu-L-Lys-D-Ala-D-Ala)](n)-di-trans,octa-cis-undecaprenyl diphosphate + beta-D-GlcNAc-(1-&gt;4)-Mur2Ac(oyl-L-Ala-gamma-D-Glu-L-Lys-D-Ala-D-Ala)-di-trans,octa-cis-undecaprenyl diphosphate = [GlcNAc-(1-&gt;4)-Mur2Ac(oyl-L-Ala-gamma-D-Glu-L-Lys-D-Ala-D-Ala)](n+1)-di-trans,octa-cis-undecaprenyl diphosphate + di-trans,octa-cis-undecaprenyl diphosphate + H(+). Its pathway is cell wall biogenesis; peptidoglycan biosynthesis. Peptidoglycan polymerase that catalyzes glycan chain elongation using lipid-linked disaccharide-pentapeptide as the substrate. This Staphylococcus aureus (strain Newman) protein is Monofunctional glycosyltransferase.